We begin with the raw amino-acid sequence, 339 residues long: Uroporphyrinogen decarboxylase (339 aa).

Residues Arg21–Arg25, Phe40, Asp71, Tyr147, Ser202, and His315 each bind substrate.

Belongs to the uroporphyrinogen decarboxylase family. In terms of assembly, homodimer.

It is found in the cytoplasm. It carries out the reaction uroporphyrinogen III + 4 H(+) = coproporphyrinogen III + 4 CO2. The protein operates within porphyrin-containing compound metabolism; protoporphyrin-IX biosynthesis; coproporphyrinogen-III from 5-aminolevulinate: step 4/4. Functionally, catalyzes the decarboxylation of four acetate groups of uroporphyrinogen-III to yield coproporphyrinogen-III. The protein is Uroporphyrinogen decarboxylase of Helicobacter pylori (strain ATCC 700392 / 26695) (Campylobacter pylori).